Reading from the N-terminus, the 111-residue chain is Succinate dehydrogenase assembly factor 1B, mitochondrial (111 aa).

It belongs to the complex I LYR family. SDHAF1 subfamily. As to quaternary structure, interacts with the iron-sulfur protein subunit within the SDH catalytic dimer.

It localises to the mitochondrion matrix. Its function is as follows. Plays an essential role in the assembly of succinate dehydrogenase (SDH), an enzyme complex (also referred to as respiratory complex II) that is a component of both the tricarboxylic acid (TCA) cycle and the mitochondrial electron transport chain, and which couples the oxidation of succinate to fumarate with the reduction of ubiquinone (coenzyme Q) to ubiquinol. Promotes maturation of the iron-sulfur protein subunit of the SDH catalytic dimer, protecting it from the deleterious effects of oxidants. May act together with SDHAF3. The polypeptide is Succinate dehydrogenase assembly factor 1B, mitochondrial (Dictyostelium discoideum (Social amoeba)).